A 348-amino-acid chain; its full sequence is Small ribosomal subunit protein mS45 (348 aa).

Residues 37 to 57 (SCSSSSPQSSQPTTHQQQCSS) are compositionally biased toward low complexity. The disordered stretch occupies residues 37-63 (SCSSSSPQSSQPTTHQQQCSSFSTTAP).

The protein belongs to the mitochondrion-specific ribosomal protein mS45 family. As to quaternary structure, component of the mitochondrial small ribosomal subunit (mt-SSU). Mature N.crassa 74S mitochondrial ribosomes consist of a small (37S) and a large (54S) subunit. The 37S small subunit contains a 16S ribosomal RNA (16S mt-rRNA) and 32 different proteins. The 54S large subunit contains a 23S rRNA (23S mt-rRNA) and 42 different proteins.

It is found in the mitochondrion. In terms of biological role, component of the mitochondrial ribosome (mitoribosome), a dedicated translation machinery responsible for the synthesis of mitochondrial genome-encoded proteins, including at least some of the essential transmembrane subunits of the mitochondrial respiratory chain. The mitoribosomes are attached to the mitochondrial inner membrane and translation products are cotranslationally integrated into the membrane. This Neurospora crassa (strain ATCC 24698 / 74-OR23-1A / CBS 708.71 / DSM 1257 / FGSC 987) protein is Small ribosomal subunit protein mS45 (mrps35).